Consider the following 199-residue polypeptide: BREX protein BrxA (199 aa).

It belongs to the BrxA family.

Its function is as follows. BREX systems (bacteriophage exclusion) provide immunity against bacteriophage. Part of a type 1 BREX system which protects against dsDNA phage. This system allows phage adsorption but prevents phage DNA replication, without degradation of the phage DNA. Methylation of bacterial DNA by PglX guides self/non-self discrimination. The chain is BREX protein BrxA from Paramagnetospirillum magneticum (strain ATCC 700264 / AMB-1) (Magnetospirillum magneticum).